Consider the following 189-residue polypeptide: Probable pericyclase scpY (189 aa).

Belongs to the pericyclase pydY family.

It functions in the pathway mycotoxin biosynthesis. In terms of biological role, probable pericyclase; part of the gene scp cluster that mediates the biosynthesis of a hirsutellone-like compound that has still to be identified. The sequence is that of Probable pericyclase scpY from Mollisia scopiformis (Conifer needle endophyte fungus).